Reading from the N-terminus, the 502-residue chain is ATP synthase subunit alpha (502 aa).

169–176 (GDRQTGKT) serves as a coordination point for ATP.

Belongs to the ATPase alpha/beta chains family. As to quaternary structure, F-type ATPases have 2 components, CF(1) - the catalytic core - and CF(0) - the membrane proton channel. CF(1) has five subunits: alpha(3), beta(3), gamma(1), delta(1), epsilon(1). CF(0) has three main subunits: a(1), b(2) and c(9-12). The alpha and beta chains form an alternating ring which encloses part of the gamma chain. CF(1) is attached to CF(0) by a central stalk formed by the gamma and epsilon chains, while a peripheral stalk is formed by the delta and b chains.

Its subcellular location is the cell membrane. The enzyme catalyses ATP + H2O + 4 H(+)(in) = ADP + phosphate + 5 H(+)(out). Produces ATP from ADP in the presence of a proton gradient across the membrane. The alpha chain is a regulatory subunit. In Staphylococcus aureus (strain Mu3 / ATCC 700698), this protein is ATP synthase subunit alpha.